Consider the following 397-residue polypeptide: MELYPGYLEDHFNIHKLSISSASPPEYMTSASTQFAAPVRMGAYDRPPPVGMWSHEQFKVDNGQATSASTIMEAEMKFENRLEEIPQVVLEEGRNVDQEASKPPDKVLRRLAQNREAARKSRLRKKAYIQQLETSRLKLAQLEQELQRARQQAVYANGSLREPNLGFTGPIDPGALGFEIKYSHWVDEQNRNTGELRNALLQGQTTDQDLELKLLVEAGLDNYNRLFEMKEEAANSDVFYIMSGMWKTPTERFFLWIGGFRPSEVLKNLRPQLEPLTDKQVVEVGGLQQTSMQVEDALSQGMDKLKQTIADSLTAADPFDSPEAYMVHMANAVEQLRSLVQFVTQADHLRQQTLQEMHRILTTRQAARGLLALGDYFQRFRALSSLWAARPRDSGIS.

In terms of domain architecture, bZIP spans proline 104 to arginine 148. The interval lysine 106 to lysine 126 is basic motif. The tract at residues leucine 132–leucine 146 is leucine-zipper. Residues alanine 175 to arginine 390 form the DOG1 domain.

This sequence belongs to the bZIP family.

Its subcellular location is the nucleus. In terms of biological role, transcriptional regulator involved in defense response. This chain is Transcription factor TGAL6, found in Oryza sativa subsp. japonica (Rice).